Consider the following 339-residue polypeptide: Glycerol-3-phosphate dehydrogenase [NAD(P)+] (339 aa).

NADPH contacts are provided by Ser11, Trp12, and Lys109. 3 residues coordinate sn-glycerol 3-phosphate: Lys109, Gly140, and Ser142. NADPH is bound at residue Ala144. Positions 195, 249, 259, 260, and 261 each coordinate sn-glycerol 3-phosphate. The Proton acceptor role is filled by Lys195. An NADPH-binding site is contributed by Arg260. Residues Val284 and Glu286 each coordinate NADPH.

It belongs to the NAD-dependent glycerol-3-phosphate dehydrogenase family.

The protein resides in the cytoplasm. It catalyses the reaction sn-glycerol 3-phosphate + NAD(+) = dihydroxyacetone phosphate + NADH + H(+). The enzyme catalyses sn-glycerol 3-phosphate + NADP(+) = dihydroxyacetone phosphate + NADPH + H(+). It functions in the pathway membrane lipid metabolism; glycerophospholipid metabolism. In terms of biological role, catalyzes the reduction of the glycolytic intermediate dihydroxyacetone phosphate (DHAP) to sn-glycerol 3-phosphate (G3P), the key precursor for phospholipid synthesis. The sequence is that of Glycerol-3-phosphate dehydrogenase [NAD(P)+] from Lactobacillus helveticus (strain DPC 4571).